A 311-amino-acid chain; its full sequence is Manganese-dependent inorganic pyrophosphatase (311 aa).

His10, Asp14, Asp16, Asp75, His97, and Asp149 together coordinate Mn(2+).

This sequence belongs to the PPase class C family. As to quaternary structure, homodimer. It depends on Mn(2+) as a cofactor.

It carries out the reaction diphosphate + H2O = 2 phosphate + H(+). In Methanothrix thermoacetophila (strain DSM 6194 / JCM 14653 / NBRC 101360 / PT) (Methanosaeta thermophila), this protein is Manganese-dependent inorganic pyrophosphatase (ppaC).